We begin with the raw amino-acid sequence, 585 residues long: Serine/threonine-protein kinase Nek3 (585 aa).

Residues 4–258 (YEVLEQIGKG…AAELLKHPHL (255 aa)) form the Protein kinase domain. Residues 10–18 (IGKGSFGSA) and Lys-33 each bind ATP. Residue Asp-129 is the Proton acceptor of the active site. Disordered stretches follow at residues 354–413 (GNHS…TPVN) and 489–511 (DSSK…SNPL). 2 stretches are compositionally biased toward polar residues: residues 400-413 (RASQ…TPVN) and 498-511 (SSDP…SNPL).

The protein belongs to the protein kinase superfamily. NEK Ser/Thr protein kinase family. NIMA subfamily. As to quaternary structure, interacts with PLIM2B. As to expression, expressed in pollen grains.

It catalyses the reaction L-seryl-[protein] + ATP = O-phospho-L-seryl-[protein] + ADP + H(+). It carries out the reaction L-threonyl-[protein] + ATP = O-phospho-L-threonyl-[protein] + ADP + H(+). Functionally, may be involved in plant development processes. May function downstream of DCW11 in retrograde signaling from the mitochondria to the nucleus. Seems to be involved in the mechanism of cytoplasmic male sterility (CMS) occurrence. The polypeptide is Serine/threonine-protein kinase Nek3 (Oryza sativa subsp. japonica (Rice)).